The sequence spans 214 residues: Outer-membrane lipoprotein LolB (214 aa).

The signal sequence occupies residues 1–25; the sequence is MNNLKRFTKSIFSCIALSGLLFLGG. Cys26 carries the N-palmitoyl cysteine lipid modification. Cys26 carries S-diacylglycerol cysteine lipidation.

The protein belongs to the LolB family. As to quaternary structure, monomer.

Its subcellular location is the cell outer membrane. Its function is as follows. Plays a critical role in the incorporation of lipoproteins in the outer membrane after they are released by the LolA protein. The sequence is that of Outer-membrane lipoprotein LolB from Shewanella sp. (strain MR-7).